The sequence spans 1325 residues: Sperm-specific sodium:proton exchanger (1325 aa).

Positions 1-29 (MKKRVVKLRELVPAVAALAVAVLIQSATG) are cleaved as a signal peptide. The interval 28–68 (TGSSGGSGHTPTTQATHADDHDLTTHNGTEEHDDGHDDGHD) is disordered. At 30-76 (SSGGSGHTPTTQATHADDHDLTTHNGTEEHDDGHDDGHDDLHAHAPK) the chain is on the extracellular side. Basic and acidic residues predominate over residues 44–68 (HADDHDLTTHNGTEEHDDGHDDGHD). Histidine 73 serves as a coordination point for a 1,2-diacylglycero-3-phosphate. The helical transmembrane segment at 77 to 96 (VIVFISGSCLFGAISRSLFK) threads the bilayer. Topologically, residues 97-101 (KLPIP) are cytoplasmic. The helical transmembrane segment at 102–119 (YTVVLLILGAILGVVASN) threads the bilayer. Topologically, residues 120-135 (VPLVEEHTRDVAHMDP) are extracellular. A helical membrane pass occupies residues 136–152 (HVLLQIFLPVLIFESAF). At 153–162 (AMDVHTFMRS) the chain is on the cytoplasmic side. The chain crosses the membrane as a helical span at residues 163–188 (FSQVCILALFGLVVASVLTAVLAMNL). The interval 163–250 (FSQVCILALF…AIVIFNVFMK (88 aa)) is transport core domain. The Extracellular portion of the chain corresponds to 189–194 (FNYNWN). The helical transmembrane segment at 195–220 (FSEAMMFGAIMSATDPVAVVALLKDL) threads the bilayer. The Cytoplasmic segment spans residues 221–223 (GAS). The chain crosses the membrane as a helical span at residues 224–249 (KQLGTIIEGESLLNDGCAIVIFNVFM). Positions 237 to 238 (ND) match the Essential for sodium:proton exchange motif. The Extracellular segment spans residues 250-260 (KMVFFPQLTST). Residues 261-292 (VGQNVLYFLQVAVAGPLWGYAVAKVTVFFLSH) form a helical membrane-spanning segment. Topologically, residues 293 to 296 (IFND) are cytoplasmic. Residues 297–319 (ALVEITITLAATYLTYYIGDIWL) traverse the membrane as a helical segment. Topologically, residues 320–322 (EVS) are extracellular. Residues 323–336 (GVLAVVVLGLIVNA) traverse the membrane as a helical segment. Topologically, residues 337-343 (EKTSISP) are cytoplasmic. The helical transmembrane segment at 344-377 (EVEVFLHRFWEMLAYLANTLIFMMVGVVVTQKAL) threads the bilayer. Residues 378-382 (VAVDK) are Extracellular-facing. Residues 383–412 (MDWFYLIILYLAITIIRGMVISLFSPILSR) traverse the membrane as a helical segment. The interval 383–481 (MDWFYLIILY…TTIQTLLRIL (99 aa)) is transport core domain. Residues 413-418 (IGYGLT) are Cytoplasmic-facing. A helical transmembrane segment spans residues 419–446 (WRNAVIMTWGGLRGAVGLALALVVENLA). Residues 447-450 (GNDV) lie on the Extracellular side of the membrane. Residues 451 to 481 (IGSKFLFHTAGIVVLTLVINATTIQTLLRIL) traverse the membrane as a helical segment. The Cytoplasmic segment spans residues 482–677 (GMSDISIPKR…GKLMYKICHH (196 aa)). Residues 575–620 (FADMMEEARLRMLKAEKISYWKQFEHGMLAREALRLLVQHAEVAAD) are interacts with the S4 segment of voltage sensor domain. An interacts with the transport core domain; can lock the transporter in the inward conformation region spans residues 605 to 620 (REALRLLVQHAEVAAD). A helical membrane pass occupies residues 678 to 708 (MAFEVTINIAIVLNIVPIIMEFVVQDKMASV). Over 709–724 (STMAAPGSTVSSEPSS) the chain is Extracellular. A helical transmembrane segment spans residues 725 to 752 (LQKIEDALRISNYVFFVIYAIEAIVKIL). The Cytoplasmic portion of the chain corresponds to 753–760 (GLGRHYIV). The chain crosses the membrane as a helical span at residues 761–784 (SHWNKFDAFILVVALVDIIIAETL). Residues 785 to 795 (LKGSITINLSS) lie on the Extracellular side of the membrane. Residues 796–822 (IKVVKLFRLLRGLRMLRLTKALIPKLI) traverse the membrane as a helical segment. The interval 796–857 (IKVVKLFRLL…EEVGKIIDRM (62 aa)) is S4 segment of voltage sensor domain. Topologically, residues 823–1325 (LVVNGKINNQ…EEGAAPRVNV (503 aa)) are cytoplasmic. The tract at residues 860–919 (NKKILRELKHISETGRLQVVKELGLLQREHPGIAVSVKTRQAIRTILNHSRETIHELQGA) is interacts with the S4 segment of voltage sensor domain. A cNMP-binding domain region spans residues 968–1068 (KLIDFIKARA…CETTVQVYFI (101 aa)). Position 1043 (glycine 1043) interacts with 3',5'-cyclic AMP. The 3',5'-cyclic GMP site is built by glycine 1043, glutamate 1044, and methionine 1045. 3',5'-cyclic AMP-binding residues include methionine 1045, glycine 1046, arginine 1053, and asparagine 1054. Positions 1053 and 1054 each coordinate 3',5'-cyclic GMP. Residues 1237 to 1325 (MLSRKSSGAA…EEGAAPRVNV (89 aa)) are disordered. Residues 1266–1280 (VSPSVPTKTTPKPKS) are compositionally biased toward low complexity.

It belongs to the monovalent cation:proton antiporter 1 (CPA1) transporter (TC 2.A.36) family. Homodimer; the dimerization is stabilized in the presence of phosphatidic acids.

The protein resides in the cell projection. It localises to the cilium. It is found in the flagellum membrane. The enzyme catalyses Na(+)(in) + H(+)(out) = Na(+)(out) + H(+)(in). Gated by voltage and stimulated by cyclic nucleotides which shift the activation voltage closer to resting membrane potential. Not inhibited by common sodium:proton exchanger inhibitors such as amiloride. In terms of biological role, electroneutral sodium:proton antiporter that regulates intracellular pH of sperm along with capacitation and fertility. Activated in response to egg-derived chemoattractants, couples membrane voltage to sodium:proton exchange and transduces membrane hyperpolarization to cytoplasmic alkalization to cAMP signaling and ultimately to sperm motility. The sequence is that of Sperm-specific sodium:proton exchanger from Strongylocentrotus purpuratus (Purple sea urchin).